The following is a 368-amino-acid chain: Glutamate 5-kinase (368 aa).

Lys-18 provides a ligand contact to ATP. Residues Ser-58, Asp-145, and Asn-157 each contribute to the substrate site. Residues 177–178 and 218–224 contribute to the ATP site; these read SD and TGGMASK. The region spanning 280–358 is the PUA domain; that stretch reads AGSLTLDEGA…SELPGELRRP (79 aa).

This sequence belongs to the glutamate 5-kinase family.

Its subcellular location is the cytoplasm. It catalyses the reaction L-glutamate + ATP = L-glutamyl 5-phosphate + ADP. The protein operates within amino-acid biosynthesis; L-proline biosynthesis; L-glutamate 5-semialdehyde from L-glutamate: step 1/2. In terms of biological role, catalyzes the transfer of a phosphate group to glutamate to form L-glutamate 5-phosphate. This is Glutamate 5-kinase from Mycobacterium ulcerans (strain Agy99).